The sequence spans 119 residues: Non-structural protein 3b (119 aa).

Residues 2–83 (DYVSLLNQFW…ARLICEQLQA (82 aa)) form the DRBM domain.

As to quaternary structure, interacts with host RUNX1 isoform b.

It is found in the host nucleus. The protein localises to the host nucleolus. The protein resides in the host mitochondrion. Induces host cell G0/G1 arrest and apoptosis. The protein is Non-structural protein 3b of Tylonycteris pachypus (Lesser bamboo bat).